A 648-amino-acid chain; its full sequence is Replication restart protein PriA (648 aa).

Residues 131 to 297 (TILNESNKPT…KTHKYQLVTL (167 aa)) form the Helicase ATP-binding domain. Residue 144–151 (GVTGSGKT) coordinates ATP. Residues 240–243 (DEEH) carry the DEAH box motif. Zn(2+)-binding residues include Cys-358, Cys-361, Cys-367, Cys-370, Cys-385, Cys-388, Cys-398, and Cys-401. The 174-residue stretch at 375 to 548 (VLHKATKKLE…RFFTNELEIR (174 aa)) folds into the Helicase C-terminal domain.

Belongs to the helicase family. PriA subfamily. In terms of assembly, component of the replication restart primosome. Zn(2+) serves as cofactor.

The enzyme catalyses Couples ATP hydrolysis with the unwinding of duplex DNA by translocating in the 3'-5' direction.. It carries out the reaction ATP + H2O = ADP + phosphate + H(+). Initiates the restart of stalled replication forks, which reloads the replicative helicase on sites other than the origin of replication. Recognizes and binds to abandoned replication forks and remodels them to uncover a helicase loading site. Promotes assembly of the primosome at these replication forks. This Rickettsia prowazekii (strain Madrid E) protein is Replication restart protein PriA.